Consider the following 466-residue polypeptide: MPEKGTVVMSRYELGRSLGHGTFSKVYQARSLVSGETVAVKVIDKEKALRAGAGMVDQIEREVAVMRLVGRHPNVVRLHEVMASRSKIYFVMELVRGGELLARLVAGGGRLGEDAARRYFHQLVAAVDFCHSRGVYHRDLKPENLLVDDDGSGGGGNLKVTDFGLSALSASRRHDGLLHTTCGTPSYVAPEIIGDKGYDGATADVWSCGVILFLLLAGYLPFFDSNLMEMYKKITNGEFKVPDWFTPDARSLISRLLDPNPTTRITIDELVKHPWFKKGHTKRPASSNTMKLNEEEKPANAAMNMKPASLNAFDIISLSQGFDLSGMFCCHGHSSRTQDQLFVTGKPATAIVSRLEEIAETEHFTVKKKQKKRQEEDGMAVKLQGWKEGRKGQLAIDAEIFEVSPSCYVVEVKKTAGDTLEYQAFCNRDLRPSLNDICWTSPATAASEKNQLPAVSEVSPLSSPRN.

The 265-residue stretch at 12 to 276 (YELGRSLGHG…IDELVKHPWF (265 aa)) folds into the Protein kinase domain. Residues 18–26 (LGHGTFSKV) and Lys-41 contribute to the ATP site. Asp-139 serves as the catalytic Proton acceptor. Residues 162–191 (DFGLSALSASRRHDGLLHTTCGTPSYVAPE) form an activation loop region. One can recognise an NAF domain in the interval 297-329 (KPANAAMNMKPASLNAFDIISLSQGFDLSGMFC). The segment at 337–366 (TQDQLFVTGKPATAIVSRLEEIAETEHFTV) is PPI. The tract at residues 446–466 (ASEKNQLPAVSEVSPLSSPRN) is disordered.

This sequence belongs to the protein kinase superfamily. CAMK Ser/Thr protein kinase family. SNF1 subfamily. Requires Mn(2+) as cofactor.

The catalysed reaction is L-seryl-[protein] + ATP = O-phospho-L-seryl-[protein] + ADP + H(+). It carries out the reaction L-threonyl-[protein] + ATP = O-phospho-L-threonyl-[protein] + ADP + H(+). CIPK serine-threonine protein kinases interact with CBL proteins. Binding of a CBL protein to the regulatory NAF domain of CIPK protein lead to the activation of the kinase in a calcium-dependent manner. This is CBL-interacting protein kinase 20 (CIPK20) from Oryza sativa subsp. japonica (Rice).